Consider the following 168-residue polypeptide: MNRIEHYHDWLRDAHAMEKQAESMLESMASRIDNYPELRARIEQHLSETKNQIVQLETILDRNDISRSVIKDSMSKMAALGQSIGGIFPSDEIVKGSISGYVFEQFEIACYTSLLAAAKNAGDTASIPTIEAILNEEKQMADWLIQNIPQTTEKFLIRSETDGVEAKK.

The polypeptide is Protein YciE (yciE) (Escherichia coli (strain K12)).